Here is a 541-residue protein sequence, read N- to C-terminus: Formimidoyltransferase-cyclodeaminase (541 aa).

Residues 1–181 (MSQLVECVPN…GATVTGARKF (181 aa)) form a formiminotransferase N-subdomain region. Residue H82 is the For formimidoyltransferase activity of the active site. 163–172 (GPSSFVPSWG) contributes to the folate binding site. The interval 182-326 (LIAFNINLLS…PKERIIEYLV (145 aa)) is formiminotransferase C-subdomain. A linker region spans residues 327 to 334 (PDSGPEQS). Residues 335–541 (LLDASLRAFV…VLGSLEARKE (207 aa)) form a cyclodeaminase/cyclohydrolase region. D412 serves as the catalytic For cyclodeaminase activity. S520 carries the phosphoserine modification.

It in the C-terminal section; belongs to the cyclodeaminase/cyclohydrolase family. This sequence in the N-terminal section; belongs to the formiminotransferase family. In terms of assembly, homooctamer, including four polyglutamate binding sites. The subunits are arranged as a tetramer of dimers, and form a planar ring-shaped structure. In terms of tissue distribution, specifically expressed in liver (at protein level).

It localises to the cytoplasm. Its subcellular location is the cytosol. It is found in the golgi apparatus. The protein localises to the cytoskeleton. The protein resides in the microtubule organizing center. It localises to the centrosome. Its subcellular location is the centriole. It carries out the reaction 5-formimidoyltetrahydrofolate + L-glutamate = N-formimidoyl-L-glutamate + (6S)-5,6,7,8-tetrahydrofolate. The enzyme catalyses 5-formimidoyltetrahydrofolate + 2 H(+) = (6R)-5,10-methenyltetrahydrofolate + NH4(+). The protein operates within amino-acid degradation; L-histidine degradation into L-glutamate; L-glutamate from N-formimidoyl-L-glutamate (transferase route): step 1/1. Functionally, folate-dependent enzyme, that displays both transferase and deaminase activity. Serves to channel one-carbon units from formiminoglutamate to the folate pool. Its function is as follows. Binds and promotes bundling of vimentin filaments originating from the Golgi. The sequence is that of Formimidoyltransferase-cyclodeaminase (Ftcd) from Rattus norvegicus (Rat).